A 367-amino-acid chain; its full sequence is MAESMLSLPTPLNISIWWNMGSILGMILGLQLLTGILLSMHYSSQLEMAFSSIIHIIRDVPGGWFLRLLHANGASLFFLFMYAHIGRGLYYQSYIIHPRVWMVGVTIFLVSMATAFLGYVLPWGQMSFWGATVITNLLSAVPYFGPSMVEWVWGGFSVGHATLNRFFSLHFLLPFLISGLALLHIIFLHDKGSSNPLGNLFHLSKKPFHPYFTIKDSVGFLMVFGVLLMITFFSPSLLLDPENYISANPMVTPTHIQPEWYFLFAYAILRSIPSKLGGVVALLMSILILYFLPLSSYGKSIPVSMNIIYQVLFWILVVTFIILTWLGACEIEEPYLSLAGPLTLLYFLMFLLLGMSNNLNFNLIQLK.

A run of 4 helical transmembrane segments spans residues methionine 20 to methionine 40, tryptophan 64 to isoleucine 85, tryptophan 101 to leucine 121, and phenylalanine 166 to isoleucine 186. Heme b-binding residues include histidine 70 and histidine 84. Residues histidine 170 and histidine 184 each coordinate heme b. Residue histidine 189 coordinates a ubiquinone. 4 helical membrane passes run isoleucine 214 to serine 234, leucine 276 to serine 296, isoleucine 308 to alanine 328, and tyrosine 335 to methionine 355.

The protein belongs to the cytochrome b family. The main subunits of complex b-c1 are: cytochrome b, cytochrome c1 and the Rieske protein. Heme b is required as a cofactor.

The protein resides in the mitochondrion inner membrane. Its function is as follows. Component of the ubiquinol-cytochrome c reductase complex (complex III or cytochrome b-c1 complex) that is part of the mitochondrial respiratory chain. The b-c1 complex mediates electron transfer from ubiquinol to cytochrome c. Contributes to the generation of a proton gradient across the mitochondrial membrane that is then used for ATP synthesis. The protein is Cytochrome b (MT-CYB) of Albinaria caerulea (Land snail).